Consider the following 176-residue polypeptide: MTGCLKIGPGDEAPDVVNVVIEIPMNSSVKYEFDKEACIVKVDRFLYTSMVYPFNYGFIPGTLEEDGDPVDVLVISREPVAPGSLIEAVPVAVLDMEDEEGPDSKVVAVPKAKLDPLFASYKDVGDIPDALKSKIKHFFEHYKELEPGKWVRVTGWRPAADAKEIIRRAIERYKGA.

Substrate contacts are provided by K30, R44, and Y56. Residues D66, D71, and D103 each contribute to the Mg(2+) site. Residue Y142 participates in substrate binding.

Belongs to the PPase family. In terms of assembly, homohexamer. Requires Mg(2+) as cofactor.

The protein resides in the cytoplasm. The enzyme catalyses diphosphate + H2O = 2 phosphate + H(+). In terms of biological role, catalyzes the hydrolysis of inorganic pyrophosphate (PPi) forming two phosphate ions. The chain is Inorganic pyrophosphatase from Aeropyrum pernix (strain ATCC 700893 / DSM 11879 / JCM 9820 / NBRC 100138 / K1).